The sequence spans 482 residues: UDP-N-acetylmuramate--L-alanine ligase (482 aa).

Position 123–129 (123–129 (GTHGKTT)) interacts with ATP.

Belongs to the MurCDEF family.

It localises to the cytoplasm. It carries out the reaction UDP-N-acetyl-alpha-D-muramate + L-alanine + ATP = UDP-N-acetyl-alpha-D-muramoyl-L-alanine + ADP + phosphate + H(+). Its pathway is cell wall biogenesis; peptidoglycan biosynthesis. Its function is as follows. Cell wall formation. The sequence is that of UDP-N-acetylmuramate--L-alanine ligase from Pseudomonas putida (strain W619).